The chain runs to 924 residues: MAGKARVHELAKELGVTSKEVLARLNEQGEFVKSASSTVEAPVARRLRESFGGIKPAADKGAEQVATKAQAKRLGESLDQTLDRALDKAVAGNGATTAAPVQVDHSAAVVPIVAGEGPSTAHREELAPPAGQPSEQPGVPLPGQQGTPAAPHPGHPGMPTGPHPGPAPKPGGRPPRVGNNPFSSAQSVARPIPRPPAPRPSASPSSMSPRPGGAVGGGGPRPPRTGVPRPGGGRPGAPVGGRSDAGGGNYRGGGVGALPGGGSGGFRGRPGGGGHGGGGRPGQRGGAAGAFGRPGGAPRRGRKSKRQKRQEYDSMQAPVVGGVRLPHGNGETIRLARGASLSDFAEKIDANPAALVQALFNLGEMVTATQSVGDETLELLGSEMNYNVQVVSPEDEDRELLEPFDLTYGEDQGDEDELQVRPPVVTVMGHVDHGKTRLLDTIRKANVREAEAGGITQHIGAYQVGVDLDGSERLITFIDTPGHEAFTAMRARGAKATDIAILVVAADDGVMPQTVEAINHAQAADVPIVVAVNKIDKEGADPAKIRGQLTEYGLVAEDFGGDTMFIDISAKVGTNIEALLEAVLLTADAALDLRANSGMEAQGVAIEAHLDRGRGPVATVLVQRGTLRIGDSVVAGDAYGRVRRMVDEHGVDIEAALPSSPVQVIGFTSVPGAGDNFLVVDEDRIARQIADRRSARKRNALAARSRKRISLEDLDSALKETSQLNLILKGDNAGTVEALEEALMGIQVDDEVALRVIDRGVGGITETNVNLASASDAIIIGFNVRAEGKATELASREGVEIRYYLVIYQAIDDIEKALRGMLKPIYEENQLGRAEIRALFRSSKVGIIAGCIISSGVVRRNAKVRLLRDNIVVTDNLTVTSLRREKDDVTEVREGFECGMTLGYSDIKEGDVIESYELVEKQRA.

The disordered stretch occupies residues 118-325; the sequence is PSTAHREELA…QAPVVGGVRL (208 aa). Composition is skewed to pro residues over residues 150-173 and 192-201; these read APHP…PGGR and IPRPPAPRPS. Positions 202-212 are enriched in low complexity; it reads ASPSSMSPRPG. The segment covering 229–295 has biased composition (gly residues); that stretch reads RPGGGRPGAP…GAAGAFGRPG (67 aa). Basic residues predominate over residues 299 to 308; that stretch reads RRGRKSKRQK. The tr-type G domain maps to 420-591; sequence VRPPVVTVMG…AVLLTADAAL (172 aa). The tract at residues 429–436 is G1; that stretch reads GHVDHGKT. Residue 429–436 coordinates GTP; sequence GHVDHGKT. The interval 454-458 is G2; the sequence is GITQH. Residues 479–482 form a G3 region; it reads DTPG. GTP-binding positions include 479–483 and 533–536; these read DTPGH and NKID. The G4 stretch occupies residues 533–536; sequence NKID. The tract at residues 569 to 571 is G5; it reads SAK.

Belongs to the TRAFAC class translation factor GTPase superfamily. Classic translation factor GTPase family. IF-2 subfamily.

It localises to the cytoplasm. In terms of biological role, one of the essential components for the initiation of protein synthesis. Protects formylmethionyl-tRNA from spontaneous hydrolysis and promotes its binding to the 30S ribosomal subunits. Also involved in the hydrolysis of GTP during the formation of the 70S ribosomal complex. The protein is Translation initiation factor IF-2 of Mycobacterium leprae (strain Br4923).